The primary structure comprises 432 residues: Trigger factor (432 aa).

The PPIase FKBP-type domain occupies 163-248 (GDIAVIDFEG…LKALNKKELP (86 aa)).

Belongs to the FKBP-type PPIase family. Tig subfamily.

It localises to the cytoplasm. It catalyses the reaction [protein]-peptidylproline (omega=180) = [protein]-peptidylproline (omega=0). Its function is as follows. Involved in protein export. Acts as a chaperone by maintaining the newly synthesized protein in an open conformation. Functions as a peptidyl-prolyl cis-trans isomerase. This chain is Trigger factor, found in Thermoanaerobacter pseudethanolicus (strain ATCC 33223 / 39E) (Clostridium thermohydrosulfuricum).